Consider the following 83-residue polypeptide: Probable calcium-binding protein CML28 (83 aa).

2 EF-hand domains span residues 5–40 (TEKA…LGSV) and 43–75 (EDIK…NRGL). Ca(2+) is bound by residues Asp18, Asn20, Asp22, Lys24, Glu29, Asp53, Asp55, Asp57, Tyr59, and Glu64.

Its function is as follows. Potential calcium sensor. This is Probable calcium-binding protein CML28 (CML28) from Arabidopsis thaliana (Mouse-ear cress).